Here is a 541-residue protein sequence, read N- to C-terminus: uncharacterized protein (541 aa).

5 helical membrane-spanning segments follow: residues 4 to 23 (FVANPLLALFVIMAVGLAIG), 30 to 47 (FSLGVAAVLFAGVGFAAV), 57 to 79 (VYILGLSIFVYSIGLESGHAFFA), 91 to 113 (LAITALALITGISIALFSLIHLN), and 156 to 178 (LVAYSLAYPIGVLGVIAAIGLCA). RCK C-terminal domains lie at 187-271 (QEAH…VLGD) and 273-354 (LPGD…LFGD). Helical transmembrane passes span 362 to 384 (FNLFPLVAGLALGLLVGMIEVPL), 389 to 411 (ALSLGSAGGPLVVALVLGAVGRS), 424 to 446 (LALRQLGITLFLAAIGTTAGASF), 456 to 478 (LTIIAVGAIITLTLAIFVLVVGY), and 516 to 538 (LGYTSVYPLAMIAKIIAAQVVLF).

This sequence belongs to the AAE transporter (TC 2.A.81) family.

The protein resides in the cell membrane. This is an uncharacterized protein from Corynebacterium diphtheriae (strain ATCC 700971 / NCTC 13129 / Biotype gravis).